The chain runs to 425 residues: Serine--tRNA ligase (425 aa).

226 to 228 (TSE) is a binding site for L-serine. Residues 257–259 (RRE) and Val273 contribute to the ATP site. Residue Glu280 participates in L-serine binding. 344 to 347 (ELTS) contributes to the ATP binding site. Thr382 serves as a coordination point for L-serine.

The protein belongs to the class-II aminoacyl-tRNA synthetase family. Type-1 seryl-tRNA synthetase subfamily. In terms of assembly, homodimer. The tRNA molecule binds across the dimer.

It is found in the cytoplasm. The enzyme catalyses tRNA(Ser) + L-serine + ATP = L-seryl-tRNA(Ser) + AMP + diphosphate + H(+). It carries out the reaction tRNA(Sec) + L-serine + ATP = L-seryl-tRNA(Sec) + AMP + diphosphate + H(+). It participates in aminoacyl-tRNA biosynthesis; selenocysteinyl-tRNA(Sec) biosynthesis; L-seryl-tRNA(Sec) from L-serine and tRNA(Sec): step 1/1. Catalyzes the attachment of serine to tRNA(Ser). Is also able to aminoacylate tRNA(Sec) with serine, to form the misacylated tRNA L-seryl-tRNA(Sec), which will be further converted into selenocysteinyl-tRNA(Sec). This Mycobacterium avium (strain 104) protein is Serine--tRNA ligase.